The sequence spans 176 residues: Disulfide bond formation protein B (176 aa).

Over 1 to 13 (MQFLNTFSKSRIS) the chain is Cytoplasmic. A helical membrane pass occupies residues 14–30 (WLLLLLCIVFFEGSALF). Over 31 to 48 (FQHGMKLGPCVMCIYERV) the chain is Periplasmic. A disulfide bond links Cys-40 and Cys-43. A helical transmembrane segment spans residues 49–64 (AMMGIAFAALLGAIAP). At 65-71 (QYAIIRW) the chain is on the cytoplasmic side. Residues 72–89 (AGLIAWGYSAVRGLQLSI) form a helical membrane-spanning segment. Over 90-144 (EHVGYQFNPSPFATCDLFVQFPNWAPLNKWVPWMFEAYGNCAEVVWTFLGQSMPQ) the chain is Periplasmic. Cysteines 104 and 130 form a disulfide. Residues 145–163 (WLVIIFAGNLVALALIVIA) traverse the membrane as a helical segment. The Cytoplasmic portion of the chain corresponds to 164-176 (QFFSKKTNTILDM).

It belongs to the DsbB family.

It localises to the cell inner membrane. Required for disulfide bond formation in some periplasmic proteins. Acts by oxidizing the DsbA protein. The polypeptide is Disulfide bond formation protein B (Photobacterium profundum (strain SS9)).